Reading from the N-terminus, the 5142-residue chain is Protein piccolo (5142 aa).

Residues 1–21 (MGNEASLEGEGLPEGLAAAAA) show a composition bias toward low complexity. Disordered regions lie at residues 1–154 (MGNE…SMMP) and 177–583 (DLIS…PSQG). Composition is skewed to basic and acidic residues over residues 114–125 (RTTDTFRSEQKL), 136–150 (KESKSRTDLKEEHKS), and 188–202 (ETTKKQKVVQKEQGK). Residues 232-244 (QDGTPKSISSQQP) are compositionally biased toward polar residues. Composition is skewed to pro residues over residues 298-317 (LPSPSKPPIQQPTPGKPPAQ) and 352-371 (PVQPPGTTKPPAQPLGPAKP). Positions 376-385 (TGSEKPSSEQ) are enriched in polar residues. Positions 397–555 (VGKTPAQQPG…PAKPSAQQST (159 aa)) are 10 X 10 AA tandem approximate repeats of P-A-K-P-Q-P-Q-Q-P-X. A compositionally biased stretch (pro residues) spans 467-493 (TKPPSQLPGPAKPPPQQPGPAKPPPQQ). Residues 494 to 506 (PGSAKPPSQQPGS) show a composition bias toward low complexity. Residues 507 to 522 (TKPPPQQPGPAKPSPQ) show a composition bias toward pro residues. Over residues 523-554 (QPGSTKPPSQQPGSAKPSAQQPSPAKPSAQQS) the composition is skewed to low complexity. Residues 589 to 613 (CPLCNTTELLLHVPEKANFNTCTEC) form a C4-type zinc finger. Disordered regions lie at residues 650–929 (LAPV…TVTG) and 945–1058 (LIST…PEST). The span at 673 to 683 (SKSSPQPQQTS) shows a compositional bias: low complexity. Composition is skewed to basic and acidic residues over residues 684 to 702 (PKKDAAPKQDLSKAPEPKK) and 743 to 755 (EQDKAPVADDKPK). A compositionally biased stretch (polar residues) spans 765 to 774 (DLVSSSSATT). The segment covering 841 to 857 (KGQKQVDPVQKKEEPKK) has biased composition (basic and acidic residues). Residues 873-882 (KGSPTPPGPR) show a composition bias toward pro residues. Residues 889–927 (VPTPQQSPKPQEQSRRFSLNLGSITDAPKSQPTTPQETV) are compositionally biased toward polar residues. 2 positions are modified to phosphoserine: Ser906 and Ser918. A Phosphothreonine modification is found at Thr922. Over residues 949–969 (AGQPGPHSQSGPGAPMKQAPA) the composition is skewed to low complexity. Composition is skewed to basic and acidic residues over residues 996-1012 (VKKETKAPAAEKLEPKA) and 1019-1034 (KRTETEKKPPPIKDSK). The C4-type zinc finger occupies 1059 to 1082 (CPLCKTELNIGSKDPPNFNTCTEC). Disordered regions lie at residues 1120–1163 (GDIR…QEQE), 1183–1386 (EKIP…TDEK), 1391–1410 (GLKKDSFSQESSPSSPSDLA), and 1423–1868 (QAST…SDPE). Residues 1126–1139 (PPAPSGPKASPMPV) are compositionally biased toward pro residues. 3 stretches are compositionally biased toward basic and acidic residues: residues 1193 to 1265 (QKQE…HDLL), 1307 to 1318 (PKEDDKTTKTIK), and 1330 to 1347 (DQVEPGKEKTEKEDDKSD). Residues 1348–1358 (TSSSQQPKSPQ) show a composition bias toward low complexity. Ser1356, Ser1366, Ser1367, Ser1396, Ser1398, Ser1401, Ser1402, and Ser1405 each carry phosphoserine. Residues 1359 to 1374 (GLSDTGYSSDGISSSL) are compositionally biased toward polar residues. Residues 1398–1407 (SQESSPSSPS) are compositionally biased toward low complexity. Composition is skewed to basic and acidic residues over residues 1428-1451 (ADEKSEKKTQPHEVSPEQPKDQEK) and 1469-1510 (KESQ…REPY). 8 positions are modified to phosphoserine: Ser1516, Ser1517, Ser1519, Ser1522, Ser1546, Ser1549, Ser1570, and Ser1572. Residues 1564–1576 (SADEDASGSEDDE) are compositionally biased toward acidic residues. Position 1617 is a phosphothreonine (Thr1617). Phosphoserine is present on residues Ser1618, Ser1628, and Ser1640. Positions 1631 to 1640 (DEDDEAFDES) are enriched in acidic residues. The segment covering 1641 to 1652 (PELKYRETKSQE) has biased composition (basic and acidic residues). Residues 1671-1689 (ELNSTIADKYSAESSQKKT) show a composition bias toward polar residues. Acidic residues predominate over residues 1693–1703 (FDEEPELEMES). Ser1703 bears the Phosphoserine mark. Thr1705 is subject to Phosphothreonine. Residues Ser1707 and Ser1712 each carry the phosphoserine modification. Residues 1715-1732 (EGSSSLHASSFTPGTSPT) show a composition bias toward polar residues. The segment covering 1772–1785 (DSSEEEELREEEEL) has biased composition (acidic residues). Residues Ser1773 and Ser1774 each carry the phosphoserine modification. Basic and acidic residues predominate over residues 1786-1799 (LKEQEKQREIEQQQ). Thr1825 is subject to Phosphothreonine. Ser1831 bears the Phosphoserine mark. A compositionally biased stretch (basic and acidic residues) spans 1840-1855 (EELRQAAEMEELHRSS). 4 positions are modified to phosphoserine: Ser1860, Ser1865, Ser1873, and Ser1894. Disordered regions lie at residues 2169–2192 (PSESATSVPPSDTPSLTSSVSSVC), 2365–2438 (ETFG…PTIL), and 2504–2536 (EPSKPPIAPKPVIPQLPTTTQKPTDIHPKPTGL). Low complexity-rich tracts occupy residues 2174-2192 (TSVPPSDTPSLTSSVSSVC) and 2374-2387 (SQLPSGSPSVSSLP). Composition is skewed to pro residues over residues 2404–2433 (QPPPPPPPPPPPPPPPPPPPPPPLPPPTSP) and 2506–2517 (SKPPIAPKPVIP). Ser2562 is subject to Phosphoserine. Thr3069 bears the Phosphothreonine mark. 2 disordered regions span residues 3407-3508 (EKQP…DKTK) and 3558-3626 (KTYK…LYSP). Basic and acidic residues predominate over residues 3432–3441 (DDPRSFKKIV). Ser3443 is subject to Phosphoserine. Phosphothreonine is present on residues Thr3447 and Thr3474. The span at 3474–3483 (TDDEDQDEWD) shows a compositional bias: acidic residues. Over residues 3574–3585 (DTQSPQYLSATS) the composition is skewed to polar residues. Phosphoserine is present on residues Ser3577, Ser3585, Ser3615, Ser3619, Ser3625, Ser3628, Ser3631, Ser3652, Ser3678, Ser3680, and Ser3686. Disordered regions lie at residues 3652–3746 (SPQK…MGTV) and 3833–3908 (YMSD…QQSH). Composition is skewed to polar residues over residues 3701-3716 (EGYTTKGSQTMTSSGA) and 3733-3745 (STGTQSTFSTMGT). The residue at position 3835 (Ser3835) is a Phosphoserine. Positions 3845-3857 (TRIESQHGIERPR) are enriched in basic and acidic residues. The segment covering 3859–3908 (APQTEFSQFIPPQTQTESQLVPPTSPYTQYQYSSPALPTQAPTSYTQQSH) has biased composition (polar residues). Ser4088 and Ser4204 each carry phosphoserine. A disordered region spans residues 4278 to 4301 (EADKPYSSGSRSRPSSRPSSVYGL). The span at 4282–4301 (PYSSGSRSRPSSRPSSVYGL) shows a compositional bias: low complexity. Phosphoserine occurs at positions 4358, 4362, 4365, 4394, and 4430. The tract at residues 4389–4411 (RDQFGSSHSLPEVQQHMREESRT) is disordered. A PDZ domain is found at 4496 to 4590 (RIKITRDSKD…EAEICVRLDL (95 aa)). Disordered regions lie at residues 4597–4618 (ENSQHLELHEPPKAVDKAKSPG) and 4645–4690 (EKGS…TKVV). A compositionally biased stretch (basic and acidic residues) spans 4598–4615 (NSQHLELHEPPKAVDKAK). The segment covering 4652–4673 (SGPTSAGSSSVPSPGQPGSPSV) has biased composition (low complexity). The residue at position 4664 (Ser4664) is a Phosphoserine. In terms of domain architecture, C2 1 spans 4694-4823 (ITGEIQLQIN…SHLDNTPRWY (130 aa)). Asp4723 and Asp4729 together coordinate Ca(2+). A Phosphoserine modification is found at Ser4778. Ca(2+) contacts are provided by Asp4793, Asp4795, Ser4798, and Asp4801. 2 disordered regions span residues 4830–4907 (ESID…VTQT) and 4930–4986 (PTKP…QNGQ). Low complexity-rich tracts occupy residues 4838–4853 (HSSQSSQQSPKPSVIK) and 4877–4887 (SSPGSSKSSSE). Residues 4895–4907 (PSRSQSKTSVTQT) are compositionally biased toward polar residues. A compositionally biased stretch (low complexity) spans 4941-4965 (SSVSTGSSGSSFGSGYSVDSEGSSS). One can recognise a C2 2 domain in the interval 5007 to 5132 (VMGEIKIALK…DLRKRIVNWH (126 aa)).

As to quaternary structure, interacts with BSN, ERC2/CAST1, RIMS1 and UNC13A. Interacts (via C-terminus) with TRIO (via N-terminus). Interacts with CTBP1. Interacts with SIAH1; this interaction negatively regulates SIAH1 E3 ligase activity. Directly interacts with GIT1 and GIT2. Ca(2+) is required as a cofactor. In terms of tissue distribution, moderately expressed in the developing cerebral cortex.

Its subcellular location is the presynaptic active zone. Functionally, scaffold protein of the presynaptic cytomatrix at the active zone (CAZ) which is the place in the synapse where neurotransmitter is released. After synthesis, participates in the formation of Golgi-derived membranous organelles termed Piccolo-Bassoon transport vesicles (PTVs) that are transported along axons to sites of nascent synaptic contacts. At the presynaptic active zone, regulates the spatial organization of synaptic vesicle cluster, the protein complexes that execute membrane fusion and compensatory endocytosis. Organizes as well the readily releasable pool of synaptic vesicles and safeguards a fraction of them to be not immediately available for action potential-induced release. Also functions in processes other than assembly such as the regulation of specific presynaptic protein ubiquitination by interacting with SIAH1 or the regulation of presynaptic autophagy. Also mediates synapse to nucleus communication leading to reconfiguration of gene expression by associating with the transcriptional corepressor CTBP1 and by subsequently reducing the size of its pool available for nuclear import. The sequence is that of Protein piccolo from Homo sapiens (Human).